Here is a 501-residue protein sequence, read N- to C-terminus: MNRFIDRVVLHLAAGDGGNGCVSVHREKFKPLGGPDGGNGGHGGDIILEVTAQVHTLLDFHFHPHVKAERGANGAGDHRNGARGKDLVLEVPPGTVVLNEKGETLADLTSVGMKFIAAAGGNGGLGNAALASKARKAPGFALIGEPGEAHDLILELKSMADVGLVGFPSAGKSSLISVMSAAKPKIGDYPFTTLQPNLGVVNVGHETFTMADVPGLIPGASEGKGLGLDFLRHIERTSVLVHVVDTATMDPGRDPISDIEALEAELAAYQSALDEDTGLGDLSQRPRIVVLNKADVPEAEELAEFLKEDIEKQFGWPVFIISAVARKGLDPLKYKLLEIVQDARKKRPKEKAESVIIKPKAVDHRTKGQFQIKPDPEVQGGFIITGEKPERWILQTDFENDEAVGYLADRLAKLGIEDGLRKAGAHVGANVTIGGISFEWEPMTTAGDDPILTGRGTDVRLEQTSRISAAERKRASQVRRGLIDELDYGEDQEASRERWEG.

The 158-residue stretch at 2 to 159 (NRFIDRVVLH…HDLILELKSM (158 aa)) folds into the Obg domain. The OBG-type G domain occupies 160 to 341 (ADVGLVGFPS…LKYKLLEIVQ (182 aa)). Residues 166–173 (GFPSAGKS), 191–195 (FTTLQ), 212–215 (DVPG), 292–295 (NKAD), and 322–324 (SAV) each bind GTP. Residues serine 173 and threonine 193 each coordinate Mg(2+). An OCT domain is found at 362-442 (VDHRTKGQFQ…IGGISFEWEP (81 aa)).

Belongs to the TRAFAC class OBG-HflX-like GTPase superfamily. OBG GTPase family. In terms of assembly, monomer. The cofactor is Mg(2+).

It localises to the cytoplasm. Its function is as follows. An essential GTPase which binds GTP, GDP and possibly (p)ppGpp with moderate affinity, with high nucleotide exchange rates and a fairly low GTP hydrolysis rate. Plays a role in control of the cell cycle, stress response, ribosome biogenesis and in those bacteria that undergo differentiation, in morphogenesis control. In Corynebacterium glutamicum (strain R), this protein is GTPase Obg.